Consider the following 476-residue polypeptide: MQAFRQRIRQTVPEMRRVKQIHFVGIGGAGMGGIAEVLLNEGYQVTGSDIAESAVTSRLISLGAKISFSHHAENIEGASVVVVSSAIKGDNIEVITAHEKRIPVIQRAQMLAEIMRFRHGIAIAGTHGKTTTTAMVAMIYAQAGLDPTFVNGGLVKSAGTNAYLGCSRYLIAEADESDASFLHLQPMVSVVTNIEPEHMETYHGDFEEMKQTYVNFLRNLPFYGLSVMCADDPVLMELSSQVGRQVVTYGFSDEADYRIEDYQQTGFQGHYTVVAPNGERIDVLLNVPGKHNALNATAALTVAKEEGIENEAILTALAEFQGAGRRFDQLGQFIRPNGKVMLVDDYGHHPTEVNVTIQAARQGWENKRIVMIFQPHRYSRTRDLFDDFVQVLSQVDVLIMLDVYAAGEQAIAGADSRSLCRSIRNLGKVDPILVSDHKQLAEIVDQVIQDGDLILAQGAGNVSKLSRELALAWGKE.

Position 125 to 131 (125 to 131 (GTHGKTT)) interacts with ATP.

The protein belongs to the MurCDEF family.

Its subcellular location is the cytoplasm. The enzyme catalyses UDP-N-acetyl-alpha-D-muramate + L-alanine + ATP = UDP-N-acetyl-alpha-D-muramoyl-L-alanine + ADP + phosphate + H(+). It participates in cell wall biogenesis; peptidoglycan biosynthesis. Cell wall formation. This is UDP-N-acetylmuramate--L-alanine ligase from Histophilus somni (strain 129Pt) (Haemophilus somnus).